The chain runs to 619 residues: Chaperone protein DnaK (619 aa).

Threonine 175 bears the Phosphothreonine; by autocatalysis mark. The tract at residues 578–619 (NGGAQGQGFDPNNMGGANAGAGATNNNDDNVVDADFEVQDDK) is disordered. Low complexity predominate over residues 589–606 (NNMGGANAGAGATNNNDD). Residues 607 to 619 (NVVDADFEVQDDK) show a composition bias toward acidic residues.

It belongs to the heat shock protein 70 family.

Functionally, acts as a chaperone. The chain is Chaperone protein DnaK from Clostridium perfringens (strain ATCC 13124 / DSM 756 / JCM 1290 / NCIMB 6125 / NCTC 8237 / Type A).